The primary structure comprises 98 residues: Cytochrome c2 (98 aa).

At Gln1 the chain carries Pyrrolidone carboxylic acid. Heme c contacts are provided by Cys10, Cys13, His14, and Met76.

Belongs to the cytochrome c family. In terms of processing, binds 1 heme c group covalently per subunit.

Its subcellular location is the periplasm. In terms of biological role, cytochrome c2 is found mainly in purple, non-sulfur, photosynthetic bacteria where it functions as the electron donor to the oxidized bacteriochlorophyll in the photophosphorylation pathway. However, it may also have a role in the respiratory chain and is found in some non-photosynthetic bacteria. The polypeptide is Cytochrome c2 (Rhodoplanes tepidamans (Rhodoplanes cryptolactis)).